A 162-amino-acid chain; its full sequence is Xanthine-guanine phosphoribosyltransferase (162 aa).

5-phospho-alpha-D-ribose 1-diphosphate-binding positions include 43 to 44 (RG) and 94 to 102 (DDLVDTGTT). Mg(2+) is bound at residue aspartate 95. Residues aspartate 98 and isoleucine 141 each coordinate guanine. Residues aspartate 98 and isoleucine 141 each coordinate xanthine. Residues 98–102 (DTGTT) and 140–141 (WI) contribute to the GMP site.

Belongs to the purine/pyrimidine phosphoribosyltransferase family. XGPT subfamily. In terms of assembly, homotetramer. Mg(2+) is required as a cofactor.

The protein resides in the cell inner membrane. The enzyme catalyses GMP + diphosphate = guanine + 5-phospho-alpha-D-ribose 1-diphosphate. It catalyses the reaction XMP + diphosphate = xanthine + 5-phospho-alpha-D-ribose 1-diphosphate. It carries out the reaction IMP + diphosphate = hypoxanthine + 5-phospho-alpha-D-ribose 1-diphosphate. The protein operates within purine metabolism; GMP biosynthesis via salvage pathway; GMP from guanine: step 1/1. It participates in purine metabolism; XMP biosynthesis via salvage pathway; XMP from xanthine: step 1/1. Its function is as follows. Purine salvage pathway enzyme that catalyzes the transfer of the ribosyl-5-phosphate group from 5-phospho-alpha-D-ribose 1-diphosphate (PRPP) to the N9 position of the 6-oxopurines guanine and xanthine to form the corresponding ribonucleotides GMP (guanosine 5'-monophosphate) and XMP (xanthosine 5'-monophosphate), with the release of PPi. To a lesser extent, also acts on hypoxanthine. The chain is Xanthine-guanine phosphoribosyltransferase from Oleidesulfovibrio alaskensis (strain ATCC BAA-1058 / DSM 17464 / G20) (Desulfovibrio alaskensis).